Reading from the N-terminus, the 733-residue chain is 1,4-alpha-glucan branching enzyme GlgB (733 aa).

Residue aspartate 413 is the Nucleophile of the active site. Residue glutamate 466 is the Proton donor of the active site.

It belongs to the glycosyl hydrolase 13 family. GlgB subfamily. Monomer.

It carries out the reaction Transfers a segment of a (1-&gt;4)-alpha-D-glucan chain to a primary hydroxy group in a similar glucan chain.. The protein operates within glycan biosynthesis; glycogen biosynthesis. Its function is as follows. Catalyzes the formation of the alpha-1,6-glucosidic linkages in glycogen by scission of a 1,4-alpha-linked oligosaccharide from growing alpha-1,4-glucan chains and the subsequent attachment of the oligosaccharide to the alpha-1,6 position. The protein is 1,4-alpha-glucan branching enzyme GlgB of Leifsonia xyli subsp. xyli (strain CTCB07).